We begin with the raw amino-acid sequence, 500 residues long: MLKKLFSFSDRYRILHQTWFAFFLTFVCWFNFAPFATTIGKELHLAPEQIKTLGICNLALTIPARLIIGMLLDRFGPRITYSILLMFAVVPCLATALAQDFNQLVISRLLMGIVGSGFVVGIRMVAEWFQPKEMGIAQGIYGGWGNFGAFGAEFALPILAISTSFFSGGASNWRLAIALVGIITAIYGVIYYNTVQDTPRGKVYKKPKKNGSLEVTSIKSFWAMMISNFGLIFALGLLAWRLEQKKIHFLTLSQMYLTWLVLAGLFAYQSYKAWQVNRELLTGKKTYPVSERFQFGQVALLEFTYITNFGSELAAVSMLPAFFEKTFGLEHVVAGMIAATYPFLNLVSRPSGGLISDKFGSRKWTMTIISVGIGVSYLMAHFINSNWPIPVAIAVTMFAAYFAQAGCGATYSIVPMIKKEATGQIAGNVGAYGNFGGVVYLTIFSLTDAPTLFSTMGIAALICAFMCAFFLKEPKGSFAPAYEGEASETATKSSVFLTEE.

12 helical membrane passes run Trp-19–Ile-39, Thr-52–Leu-72, Ile-79–Gln-99, Leu-109–Phe-129, Phe-147–Ser-167, Leu-175–Val-195, Ser-220–Trp-240, Ile-247–Ala-267, Trp-364–Asn-384, Ile-389–Ala-409, Ile-425–Ser-445, and Thr-451–Leu-471.

Belongs to the major facilitator superfamily. Nitrate/nitrite porter (TC 2.A.1.8) family.

The protein localises to the cell inner membrane. Transport system for both nitrate and nitrite, with much higher affinity for nitrate than for nitrite. The chain is Nitrate/nitrite transporter NrtP from Nostoc punctiforme (strain ATCC 29133 / PCC 73102).